Reading from the N-terminus, the 484-residue chain is Protein LAZ1 homolog 1 (484 aa).

Residues 1 to 19 (MEWRGILCSLLFIVSVGES) form the signal peptide. The next 6 membrane-spanning stretches (helical) occupy residues 42–62 (PILS…YLIF), 76–96 (FLIG…LSLV), 190–210 (MILK…GVYG), 219–239 (GYPY…YCLV), 264–284 (IVFL…MGLV), and 299–319 (YIIC…FPAA). Residues 344-364 (PDPEEVKDSERTTRTRYGRHD) form a disordered region. The span at 347–364 (EEVKDSERTTRTRYGRHD) shows a compositional bias: basic and acidic residues. The stretch at 406 to 428 (IAKINRTFHQISENVKRFEQQKK) forms a coiled coil. A disordered region spans residues 459–484 (VSDSGLGSTNRHHQSRVSGLWTRMRR).

The protein belongs to the TMEM184 family.

The protein resides in the membrane. The protein is Protein LAZ1 homolog 1 of Arabidopsis thaliana (Mouse-ear cress).